Here is a 503-residue protein sequence, read N- to C-terminus: MINIRPDEISSIIREQIEQYDQDVKIDNIGTVLQVGDGIARVYGLDQVMSGELLEFEDKTIGIALNLENDNVGVVLMGNGRQILEGGSVKSTGQIAQIPVGEAFLGRVVNPLGAPIDGKGDIASTETRLVESMAPGIISRKSVCEPLQTGITSIDAMIPIGRGQRELIIGDRQTGKTSIAVDTIINQKTEDVVCVYVGIGQKASTIAQVVNVLDEKEAMAYTIIVSASANDPATLQYIAPYSGAALAEYFMYNGKATLIVYDDLTKQAMAYRQMSLLLRRPPGREAYPGDVFYLHSRLLERAAKLSDALGGGSMTALPIIETQASDVSAYIPTNVISITDGQIFLSNDLFNSGIRPAINVGISVSRVGSAAQTKAMKQVAGKLKLELAQFAELEAFSQFASDLDEATQKQLARGTRLREILKQPQNSPLSVAQQVALIYAGINGFLDNLAVSDVKKFSASLIQTLASQKSYIDVVGKTNQFTEEAETLLKEAIASTKTGFATL.

Gly-170–Thr-177 is an ATP binding site.

Belongs to the ATPase alpha/beta chains family. F-type ATPases have 2 components, CF(1) - the catalytic core - and CF(0) - the membrane proton channel. CF(1) has five subunits: alpha(3), beta(3), gamma(1), delta(1), epsilon(1). CF(0) has four main subunits: a, b, b' and c.

Its subcellular location is the plastid. The protein localises to the chloroplast thylakoid membrane. The catalysed reaction is ATP + H2O + 4 H(+)(in) = ADP + phosphate + 5 H(+)(out). Functionally, produces ATP from ADP in the presence of a proton gradient across the membrane. The alpha chain is a regulatory subunit. The protein is ATP synthase subunit alpha, chloroplastic of Thalassiosira pseudonana (Marine diatom).